A 637-amino-acid polypeptide reads, in one-letter code: Tumor protein p73 (637 aa).

Residues 1–46 (MAQSTTTSPDGGTTFEHLWSSLEPDSTYFDLPQSSRGNNEVVGGTD) form a transactivation region. Threonine 27 is subject to Phosphothreonine. Position 28 is a phosphotyrosine; by SRC and HCK (tyrosine 28). Positions 78 to 104 (RAASASPYTPEHAASVPTHSPYAQPSS) are disordered. Positions 94-104 (PTHSPYAQPSS) are enriched in polar residues. Tyrosine 99 bears the Phosphotyrosine mark. The tract at residues 131 to 310 (FQQSSTAKSA…DRKADEDHYR (180 aa)) is DNA-binding. Residues cysteine 194, histidine 197, cysteine 258, and cysteine 262 each contribute to the Zn(2+) site. Positions 301–311 (DRKADEDHYRE) are enriched in basic and acidic residues. Residues 301–351 (DRKADEDHYREQQALNESSAKNGAASKRAFKQSPPAVPALGPGVKKRRHGD) form a disordered region. The interaction with HIPK2 stretch occupies residues 345-380 (KKRRHGDEDTYYLQVRGRENFEILMKLKESLELMEL). The oligomerization stretch occupies residues 345–386 (KKRRHGDEDTYYLQVRGRENFEILMKLKESLELMELVPQPLV). The PPxY motif motif lies at 483-487 (PPPPY). The 67-residue stretch at 485-551 (PPYHADPSLV…WRGLQDLKQG (67 aa)) folds into the SAM domain. Lysine 628 is covalently cross-linked (Glycyl lysine isopeptide (Lys-Gly) (interchain with G-Cter in SUMO); in isoform Alpha). A Glycyl lysine isopeptide (Lys-Gly) (interchain with G-Cter in SUMO2) cross-link involves residue lysine 628.

Belongs to the p53 family. In terms of assembly, found in a complex with p53/TP53 and CABLES1. The C-terminal oligomerization domain binds to the ABL1 tyrosine kinase SH3 domain. Interacts with HECW2. Isoforms Alpha and Beta interact with HIPK2. Isoform Alpha interacts with RANBP9. Interacts with WWOX. Isoform Beta interacts homotypically and with p53, whereas isoform Alpha does not. Interacts (via SAM domain) with FBXO45 (via B30.2/SPRY domain). Interacts with YAP1 (phosphorylated form). Interacts with HCK (via SH3 domain); this inhibits TP73 activity and degradation. Zn(2+) serves as cofactor. In terms of processing, isoform Alpha (but not isoform Beta) is sumoylated on Lys-628, which potentiates proteasomal degradation but does not affect transcriptional activity. Post-translationally, polyubiquitinated by RCHY1/PIRH2; leading to its degradation by the proteasome.

The protein localises to the nucleus. It localises to the cytoplasm. Its function is as follows. Participates in the apoptotic response to DNA damage. May be a tumor suppressor protein. Is an activator of FOXJ1 expression, essential for the positive regulation of lung ciliated cell differentiation. The protein is Tumor protein p73 (TP73) of Chlorocebus aethiops (Green monkey).